The chain runs to 258 residues: Imidazole glycerol phosphate synthase subunit HisF (258 aa).

Residues D11 and D130 contribute to the active site.

Belongs to the HisA/HisF family. In terms of assembly, heterodimer of HisH and HisF.

The protein localises to the cytoplasm. The enzyme catalyses 5-[(5-phospho-1-deoxy-D-ribulos-1-ylimino)methylamino]-1-(5-phospho-beta-D-ribosyl)imidazole-4-carboxamide + L-glutamine = D-erythro-1-(imidazol-4-yl)glycerol 3-phosphate + 5-amino-1-(5-phospho-beta-D-ribosyl)imidazole-4-carboxamide + L-glutamate + H(+). Its pathway is amino-acid biosynthesis; L-histidine biosynthesis; L-histidine from 5-phospho-alpha-D-ribose 1-diphosphate: step 5/9. In terms of biological role, IGPS catalyzes the conversion of PRFAR and glutamine to IGP, AICAR and glutamate. The HisF subunit catalyzes the cyclization activity that produces IGP and AICAR from PRFAR using the ammonia provided by the HisH subunit. The polypeptide is Imidazole glycerol phosphate synthase subunit HisF (Photorhabdus laumondii subsp. laumondii (strain DSM 15139 / CIP 105565 / TT01) (Photorhabdus luminescens subsp. laumondii)).